The primary structure comprises 93 residues: U12-lycotoxin-Ls1a (93 aa).

An N-terminal signal peptide occupies residues 1-18 (MKFAVILLFSLVVLAVAS). A propeptide spanning residues 19 to 38 (ESVEEVRREIDIEDLPEQQR) is cleaved from the precursor.

It belongs to the neurotoxin 31 family. In terms of processing, contains 5 disulfide bonds. Expressed by the venom gland.

Its subcellular location is the secreted. This chain is U12-lycotoxin-Ls1a, found in Lycosa singoriensis (Wolf spider).